A 165-amino-acid polypeptide reads, in one-letter code: C-phycoerythrin class 2 subunit alpha (165 aa).

Phycourobilin-binding residues include Cys-75, Cys-83, and Cys-140.

This sequence belongs to the phycobiliprotein family. In terms of assembly, heterodimer of an alpha and a beta chain. In terms of processing, contains three covalently linked phycourobilin chromophores.

The protein localises to the cellular thylakoid membrane. In terms of biological role, light-harvesting photosynthetic bile pigment-protein from the phycobiliprotein complex. The sequence is that of C-phycoerythrin class 2 subunit alpha (mpeA) from Synechococcus sp. (strain WH8103).